We begin with the raw amino-acid sequence, 404 residues long: MFRCWGPHWGWVPCAPTPWLLLSLLVCSAPFGLQGEETRQVSMEVISGWPNPQNLLHIRAVGSNSTLHYVWSSLGPPAVVLVATNTTQSVLSVNWSLLLSPDPAGALMVLPKSSIQFSSALVFTRLLEFDSTNASEGAQPPGKPYPPYSLAKFSWNNITNSLDLANLSADFQGRPVDDPTGAFANGSLTFKVQAFSRSGRPAQPPRLLHTADVCQLEVALVGASPRGNHSLFGLEVATLGQGPDCPSVNERNSIDDEYAPAVFQLNQLLWGSSPSGFMQWRPVAFSEEERARESALPCQASTLHSTLASSLPHSPIVQAFFGSQNNFCAFNLTFGAPTGPGYWDQYYLCWSMLLGMGFPPVDIFSPLVLGIMAVALGAPGLMFLGGGLFLLLRHRRYSEYQSIN.

The N-terminal stretch at 1–35 (MFRCWGPHWGWVPCAPTPWLLLSLLVCSAPFGLQG) is a signal peptide. Residues 36-370 (EETRQVSMEV…VDIFSPLVLG (335 aa)) are Lumenal-facing. N64, N85, N94, N133, N157, N166, N185, N228, and N331 each carry an N-linked (GlcNAc...) asparagine glycan. The helical transmembrane segment at 371-391 (IMAVALGAPGLMFLGGGLFLL) threads the bilayer. The Cytoplasmic portion of the chain corresponds to 392-404 (LRHRRYSEYQSIN). The Lysosomal targeting motif signature appears at 400 to 404 (YQSIN).

Belongs to the GLMP family. As to quaternary structure, interacts (via lumenal domain) with lysosomal protein MFSD1; the interaction starts while both proteins are still in the endoplasmic reticulum and is required for stabilization of MFSD1 in lysosomes but has no direct effect on its targeting to lysosomes or transporter activity. In terms of processing, highly N-glycosylated. N-glycosylation is essential for GLMP stability and for MFSD1 lysosomal localization. Detected in brain, heart, liver, kidney, lung, intestine, testis and spleen. Expressed at highest levels in kidney cortex. However, another study reports highest expression levels in lung. Expressed in myoblasts with expression increasing during differentiation into myotubes.

It localises to the lysosome membrane. Required to protect lysosomal transporter MFSD1 from lysosomal proteolysis and for MFSD1 lysosomal localization. The chain is Glycosylated lysosomal membrane protein from Mus musculus (Mouse).